The sequence spans 155 residues: Leader peptidase HopD (155 aa).

This sequence belongs to the peptidase A24 family.

The protein is Leader peptidase HopD (hopD) of Salmonella typhimurium (strain LT2 / SGSC1412 / ATCC 700720).